The chain runs to 356 residues: UDP-N-acetylglucosamine--N-acetylmuramyl-(pentapeptide) pyrophosphoryl-undecaprenol N-acetylglucosamine transferase (356 aa).

UDP-N-acetyl-alpha-D-glucosamine contacts are provided by residues 12 to 14 (TGG), N124, R163, S188, I242, 261 to 266 (ALTVSE), and Q287.

Belongs to the glycosyltransferase 28 family. MurG subfamily.

The protein resides in the cell inner membrane. The catalysed reaction is di-trans,octa-cis-undecaprenyl diphospho-N-acetyl-alpha-D-muramoyl-L-alanyl-D-glutamyl-meso-2,6-diaminopimeloyl-D-alanyl-D-alanine + UDP-N-acetyl-alpha-D-glucosamine = di-trans,octa-cis-undecaprenyl diphospho-[N-acetyl-alpha-D-glucosaminyl-(1-&gt;4)]-N-acetyl-alpha-D-muramoyl-L-alanyl-D-glutamyl-meso-2,6-diaminopimeloyl-D-alanyl-D-alanine + UDP + H(+). Its pathway is cell wall biogenesis; peptidoglycan biosynthesis. Its function is as follows. Cell wall formation. Catalyzes the transfer of a GlcNAc subunit on undecaprenyl-pyrophosphoryl-MurNAc-pentapeptide (lipid intermediate I) to form undecaprenyl-pyrophosphoryl-MurNAc-(pentapeptide)GlcNAc (lipid intermediate II). This is UDP-N-acetylglucosamine--N-acetylmuramyl-(pentapeptide) pyrophosphoryl-undecaprenol N-acetylglucosamine transferase from Pseudomonas fluorescens (strain ATCC BAA-477 / NRRL B-23932 / Pf-5).